Reading from the N-terminus, the 880-residue chain is Alanine--tRNA ligase (880 aa).

Zn(2+) is bound by residues His-567, His-571, Cys-669, and His-673.

It belongs to the class-II aminoacyl-tRNA synthetase family. Requires Zn(2+) as cofactor.

Its subcellular location is the cytoplasm. It carries out the reaction tRNA(Ala) + L-alanine + ATP = L-alanyl-tRNA(Ala) + AMP + diphosphate. Its function is as follows. Catalyzes the attachment of alanine to tRNA(Ala) in a two-step reaction: alanine is first activated by ATP to form Ala-AMP and then transferred to the acceptor end of tRNA(Ala). Also edits incorrectly charged Ser-tRNA(Ala) and Gly-tRNA(Ala) via its editing domain. This is Alanine--tRNA ligase from Bacillus cytotoxicus (strain DSM 22905 / CIP 110041 / 391-98 / NVH 391-98).